A 180-amino-acid chain; its full sequence is Ribulose bisphosphate carboxylase small subunit, chloroplastic (180 aa).

Residues 1–56 constitute a chloroplast transit peptide; that stretch reads MASSIMSSAAVATRSNGAQASMVAPFTGLKSNASFPVSRKTNLDITSIASNGGRVR.

It belongs to the RuBisCO small chain family. Heterohexadecamer of 8 large and 8 small subunits.

The protein resides in the plastid. Its subcellular location is the chloroplast. RuBisCO catalyzes two reactions: the carboxylation of D-ribulose 1,5-bisphosphate, the primary event in carbon dioxide fixation, as well as the oxidative fragmentation of the pentose substrate. Both reactions occur simultaneously and in competition at the same active site. Although the small subunit is not catalytic it is essential for maximal activity. The chain is Ribulose bisphosphate carboxylase small subunit, chloroplastic from Stellaria longipes (Longstalk starwort).